A 245-amino-acid polypeptide reads, in one-letter code: MTFTASSSSCAITESPVVVALDYHERDKALAFVDKIDPRDCRLKVGKEMFTLFGPQLVRDLQQRGFDVFLDLKFHDIPNTTARAVAAAADLGVWMVNVHASGGARMMAAARDALAPFGKDAPLLIAVTVLTSMETSDLRDLGVTLSPAEHAERLARLTQQCGLDGVVCSAQEAVRFKQVFGAAFKLVTPGIRPAGSEAGDQRRIMTPEQALSAGVDYMVIGRPVTQSVDPAQTLKDINASLKREA.

Residues Asp-22, Lys-44, 71 to 80 (DLKFHDIPNT), Thr-131, Arg-192, Gln-201, Gly-221, and Arg-222 contribute to the substrate site. The active-site Proton donor is the Lys-73.

Belongs to the OMP decarboxylase family. Type 1 subfamily. Homodimer.

It catalyses the reaction orotidine 5'-phosphate + H(+) = UMP + CO2. The protein operates within pyrimidine metabolism; UMP biosynthesis via de novo pathway; UMP from orotate: step 2/2. Functionally, catalyzes the decarboxylation of orotidine 5'-monophosphate (OMP) to uridine 5'-monophosphate (UMP). This chain is Orotidine 5'-phosphate decarboxylase, found in Salmonella paratyphi A (strain ATCC 9150 / SARB42).